The sequence spans 500 residues: L-arabinose isomerase (500 aa).

Positions 306, 333, 350, and 450 each coordinate Mn(2+).

This sequence belongs to the arabinose isomerase family. In terms of assembly, homohexamer. Mn(2+) is required as a cofactor.

It catalyses the reaction beta-L-arabinopyranose = L-ribulose. The protein operates within carbohydrate degradation; L-arabinose degradation via L-ribulose; D-xylulose 5-phosphate from L-arabinose (bacterial route): step 1/3. Catalyzes the conversion of L-arabinose to L-ribulose. The sequence is that of L-arabinose isomerase from Salmonella newport (strain SL254).